We begin with the raw amino-acid sequence, 541 residues long: Membrane protein insertase YidC (541 aa).

6 helical membrane passes run 7–27, 289–309, 356–376, 430–450, 463–483, and 498–518; these read FLIV…GVTH, YLLT…VTLP, IIHS…LAFY, LPIL…LEMV, LSAQ…MFAQ, and IMMA…SGLV.

Belongs to the OXA1/ALB3/YidC family. Type 1 subfamily. In terms of assembly, interacts with the Sec translocase complex via SecD. Specifically interacts with transmembrane segments of nascent integral membrane proteins during membrane integration.

Its subcellular location is the cell inner membrane. Required for the insertion and/or proper folding and/or complex formation of integral membrane proteins into the membrane. Involved in integration of membrane proteins that insert both dependently and independently of the Sec translocase complex, as well as at least some lipoproteins. Aids folding of multispanning membrane proteins. The chain is Membrane protein insertase YidC from Ruthia magnifica subsp. Calyptogena magnifica.